A 538-amino-acid chain; its full sequence is RNA-binding protein RO60 (538 aa).

In terms of domain architecture, TROVE spans 16-369 (VPNSEGCYVW…SFKLVEPTGK (354 aa)). Positions 120–284 (RIPTHLFTFI…DMPLTALLRN (165 aa)) are RNA-binding. The tract at residues 361-538 (FKLVEPTGKR…VIRNFTLDLI (178 aa)) is VWFA-like domain. Positions 378, 380, and 445 each coordinate a divalent metal cation.

It belongs to the Ro 60 kDa family.

Its subcellular location is the cytoplasm. Functionally, RNA-binding protein that binds to misfolded non-coding RNAs, pre-5S rRNA, and several small cytoplasmic RNA molecules known as Y RNAs. May play roles in cilia formation and/or maintenance. This is RNA-binding protein RO60 from Xenopus laevis (African clawed frog).